We begin with the raw amino-acid sequence, 475 residues long: Deoxyguanosinetriphosphate triphosphohydrolase-like protein (475 aa).

One can recognise an HD domain in the interval 118–272 (RLTHTLEVAQ…MDLSDDIAYS (155 aa)).

The protein belongs to the dGTPase family. Type 2 subfamily.

The polypeptide is Deoxyguanosinetriphosphate triphosphohydrolase-like protein (dgt) (Bifidobacterium longum (strain NCC 2705)).